Here is a 268-residue protein sequence, read N- to C-terminus: Tryptophan synthase alpha chain (268 aa).

Active-site proton acceptor residues include Glu49 and Asp60.

It belongs to the TrpA family. In terms of assembly, tetramer of two alpha and two beta chains.

The enzyme catalyses (1S,2R)-1-C-(indol-3-yl)glycerol 3-phosphate + L-serine = D-glyceraldehyde 3-phosphate + L-tryptophan + H2O. Its pathway is amino-acid biosynthesis; L-tryptophan biosynthesis; L-tryptophan from chorismate: step 5/5. Its function is as follows. The alpha subunit is responsible for the aldol cleavage of indoleglycerol phosphate to indole and glyceraldehyde 3-phosphate. In Escherichia fergusonii (strain ATCC 35469 / DSM 13698 / CCUG 18766 / IAM 14443 / JCM 21226 / LMG 7866 / NBRC 102419 / NCTC 12128 / CDC 0568-73), this protein is Tryptophan synthase alpha chain.